We begin with the raw amino-acid sequence, 365 residues long: Cytoplasmic tRNA 2-thiolation protein 1 (365 aa).

The protein belongs to the TtcA family. CTU1/NCS6/ATPBD3 subfamily.

The protein localises to the cytoplasm. It participates in tRNA modification; 5-methoxycarbonylmethyl-2-thiouridine-tRNA biosynthesis. Functionally, plays a central role in 2-thiolation of mcm(5)S(2)U at tRNA wobble positions of tRNA(Lys), tRNA(Glu) and tRNA(Gln). Directly binds tRNAs and probably acts by catalyzing adenylation of tRNAs, an intermediate required for 2-thiolation. It is unclear whether it acts as a sulfurtransferase that transfers sulfur from thiocarboxylated URM1 onto the uridine of tRNAs at wobble position. Prior mcm(5) tRNA modification by the elongator complex is required for 2-thiolation. May also be involved in protein urmylation. In Yarrowia lipolytica (strain CLIB 122 / E 150) (Yeast), this protein is Cytoplasmic tRNA 2-thiolation protein 1.